We begin with the raw amino-acid sequence, 413 residues long: MLSQRSQRNTSEIIPRLLREYHQPQAGNIDILDLSQAENSVLRDETLDEIRSAIGKHLNGSNLSYPTGVGGELAARKSLAMFFNDRFNPARSVSPDHIVMTPGASEALETLIFHICDPGEGVLIAAPYWSGLDLALETRSLARIVQVNIPLHEFFEMSSIQYYERALATSPIPIKAILMCNPHNPLGQCYNADVLEGLLGFCQRNKLHYISDEVYGMSVFSDSDKGVTPAFTSILSHATAPGLTSWVHMVYSLSKDFGCSGLRLGAIVTQGNTDLLLGSALITNNKVSSLTSVIVPSLLEPRTTQKLLNQNLRSRLNLNYGKVQRFLENRGLEFVPAKAGLFVFACLGKTRTEKEQLLLIECMKRSGVKLVAGTSFHFEQFCWFRIMFSLPKNIVDVALQRIGDALDETEKLL.

Residue Lys255 is modified to N6-(pyridoxal phosphate)lysine.

This sequence belongs to the class-I pyridoxal-phosphate-dependent aminotransferase family. The cofactor is pyridoxal 5'-phosphate.

It participates in mycotoxin biosynthesis. Probable aminotransferase; part of the gene cluster that mediates the biosynthesis of sirodesmin PL, an epipolythiodioxopiperazine (ETP) characterized by a disulfide bridged cyclic dipeptide and that acts as a phytotoxin which is involved in the blackleg didease of canola. SirD catalyzes the O-prenylation of L-tyrosine (L-Tyr) in the presence of dimethylallyl diphosphate (DMAPP) to yield 4-O-dimethylallyl-L-Tyr, and therefore represents probably the first pathway-specific enzyme in the biosynthesis of sirodesmin PL. 4-O-dimethylallyl-L-Tyr, then undergoes condensation with L-Ser in a reaction catalyzed by the non-ribosomal peptide synthase sirP to form the diketopiperazine (DKP) backbone. Further bishydroxylation of the DKP performed by the cytochrome P450 monooxygenase sirC leads to the production of the intermediate phomamide. This step is essential to form the reactive thiol group required for toxicity of sirodesmin PL. The next steps of sirodesmin biosynthesis are not well understood yet, but some predictions could be made from intermediate compounds identification. Phomamide is converted into phomalizarine via oxidation, probably by sirT. Further oxidation, methylation (by sirM or sirN) and reduction steps convert phomalizarine to deacetyl sirodesmin. Finally, acetyltransferase sirH probably acetylates deacetyl sirodesmin to produce sirodesmin PL. This Leptosphaeria maculans (Blackleg fungus) protein is Probable aminotransferase sirI.